Here is a 106-residue protein sequence, read N- to C-terminus: Transcription initiation factor IIA subunit 2 (106 aa).

It belongs to the TFIIA subunit 2 family. In terms of assembly, TFIIA is a heterodimer of the large unprocessed subunit 1 and a small subunit gamma. It was originally believed to be a heterotrimer of an alpha, a beta and a gamma subunit.

The protein resides in the nucleus. In terms of biological role, TFIIA is a component of the transcription machinery of RNA polymerase II and plays an important role in transcriptional activation. TFIIA in a complex with TBP mediates transcriptional activity. Protein involved in the resistance to X.oryzae. In Oryza sativa subsp. indica (Rice), this protein is Transcription initiation factor IIA subunit 2 (TFIIAy).